The sequence spans 269 residues: Probable cytochrome c oxidase subunit 2 (269 aa).

Transmembrane regions (helical) follow at residues 8-28 (ITLI…PLPW), 50-70 (LLYI…FVCI), and 87-107 (ILIE…IAVP). Residues His-189, Cys-224, Cys-228, and His-232 each coordinate Cu cation.

Belongs to the cytochrome c oxidase subunit 2 family. Requires Cu cation as cofactor. The cofactor is heme.

It is found in the cell membrane. It carries out the reaction 4 Fe(II)-[cytochrome c] + O2 + 8 H(+)(in) = 4 Fe(III)-[cytochrome c] + 2 H2O + 4 H(+)(out). In terms of biological role, subunits I and II form the functional core of the enzyme complex. Electrons originating in cytochrome c are transferred via heme a and Cu(A) to the binuclear center formed by heme a3 and Cu(B). The chain is Probable cytochrome c oxidase subunit 2 (ctaC) from Rickettsia bellii (strain RML369-C).